We begin with the raw amino-acid sequence, 822 residues long: Molybdenum cofactor sulfurase (822 aa).

K239 bears the N6-(pyridoxal phosphate)lysine mark. C401 is an active-site residue. The tract at residues 633 to 666 is disordered; sequence TRISNPTRSSRRSQRALMPGSFPEDPSPTSEQPP. Positions 643–820 constitute an MOSC domain; that stretch reads RRSQRALMPG…VMVGDVVTPQ (178 aa).

Belongs to the class-V pyridoxal-phosphate-dependent aminotransferase family. MOCOS subfamily. Pyridoxal 5'-phosphate serves as cofactor.

The enzyme catalyses Mo-molybdopterin + L-cysteine + AH2 = thio-Mo-molybdopterin + L-alanine + A + H2O. The protein operates within cofactor biosynthesis; molybdopterin biosynthesis. Its function is as follows. Sulfurates the molybdenum cofactor. Sulfation of molybdenum is essential for xanthine dehydrogenase (XDH) and aldehyde oxidase (ADO) enzymes in which molybdenum cofactor is liganded by 1 oxygen and 1 sulfur atom in active form. The protein is Molybdenum cofactor sulfurase of Aspergillus oryzae (strain ATCC 42149 / RIB 40) (Yellow koji mold).